The sequence spans 810 residues: Abnormal pharyngeal pumping eat-20 (810 aa).

The N-terminal stretch at 1 to 20 is a signal peptide; sequence MTTFCRVLLIFGIYVAVCCA. Topologically, residues 21–748 are extracellular; the sequence is QSVEDDVFHF…GKQSSAAASW (728 aa). 3 N-linked (GlcNAc...) asparagine glycosylation sites follow: asparagine 90, asparagine 171, and asparagine 232. EGF-like domains lie at 220–257, 258–293, and 301–335; these read PPSP…DRCE, LDVC…LLCE, and VAPI…ANCN. 9 disulfides stabilise this stretch: cysteine 224–cysteine 235, cysteine 229–cysteine 245, cysteine 247–cysteine 256, cysteine 261–cysteine 272, cysteine 266–cysteine 281, cysteine 283–cysteine 292, cysteine 305–cysteine 314, cysteine 309–cysteine 323, and cysteine 325–cysteine 334. Asparagine 371 is a glycosylation site (N-linked (GlcNAc...) asparagine). The span at 522-531 shows a compositional bias: low complexity; the sequence is FAPTTGTQQP. Disordered regions lie at residues 522-567 and 684-738; these read FAPT…STMQ and PHPQ…HTSS. Residues 542–558 are compositionally biased toward acidic residues; sequence DENEEEEEEETTEETEE. Residues 749–769 traverse the membrane as a helical segment; it reads IIAIIALIVLGLLLLATSLFI. Topologically, residues 770-810 are cytoplasmic; sequence LRYIRQSRKLHGKYNPAREEHNLSAAYAMPMSHIAKEERLI.

In terms of tissue distribution, highly expressed in the pharynx, circumpharyngeal cells, pharyngeal-intestinal valve and a subset of neurons in larval and embryonic stages. Also moderately expressed in the lining of the intestine, coelomocytes, labial process bundles and some hypodermal cells. In adults, it is predominantly expressed in the pharynx, the pharyngeal-intenstinal valve, some circumpharyngeal cells, m3, m4 and m6 pharyngeal muscles, and IL1, OLQ, BAG and ALN neurons. Weaker expression is observed in labial process bundles, coelomocytes, the ventral hypodermal ridge, the vulval hypodermis and the sensory rays of the adult male tail.

The protein localises to the membrane. Regulates pharyngeal pumping during feeding. The chain is Abnormal pharyngeal pumping eat-20 (eat-20) from Caenorhabditis elegans.